The primary structure comprises 382 residues: Serine/arginine-rich splicing factor SR45a (382 aa).

Composition is skewed to low complexity over residues 30-45, 54-68, 177-195, and 202-219; these read PMSY…SLSP, VSRS…SVSS, PSYS…SRSY, and SYSP…YSPF. 2 disordered regions span residues 30 to 76 and 150 to 382; these read PMSY…PGNS and KARR…SVSP. The span at 288 to 316 shows a compositional bias: basic and acidic residues; the sequence is RARDRSCSPYYRGRDRSYSPHYQGRDRSY. Residues 329-343 show a composition bias toward low complexity; it reads VSGSVSPGGRSMSRS. Residues 345–361 are compositionally biased toward basic residues; that stretch reads SPRKGRKESRSKSRRHD. Residues 364 to 382 are compositionally biased toward low complexity; sequence SSMCHSRSARSSTSRSVSP.

Belongs to the splicing factor SR family. SR45 subfamily. As to quaternary structure, component of the spliceosome. Homodimer. Interacts with PRP38, SCL28, SR45, RNU1 and U2AF35B. In terms of processing, phosphorylated. In terms of tissue distribution, expressed in leaves, stems and roots.

Its subcellular location is the nucleus speckle. Its function is as follows. Probable splicing factor involved in constitutive and/or alternative splicing events. May bridge the 5' and 3' components of the spliceosome. The chain is Serine/arginine-rich splicing factor SR45a (SR45A) from Arabidopsis thaliana (Mouse-ear cress).